A 69-amino-acid chain; its full sequence is Atypical cationic antimicrobial peptide (69 aa).

The signal sequence occupies residues 1–22; the sequence is MAFLKKSLFLVLFLGLVSLSIC. Residues 23–45 constitute a propeptide that is removed on maturation; sequence DEEKRENEDEENQEDDEQSEMRR. Residues 25-45 form a disordered region; it reads EKRENEDEENQEDDEQSEMRR. The segment covering 30–40 has biased composition (acidic residues); the sequence is EDEENQEDDEQ.

The protein belongs to the frog skin active peptide (FSAP) family. As to quaternary structure, monomer and/or weakly self-associated, oligomer, and amyloid-like fibril. Can adopt a monomeric nonamphipathic alpha-helical conformation, possibly with the aid of its cationic N- and C-termini, when bound to anionic membranes. Forms stable and ordered beta-sheet aggregates in aqueous environment or when bound to anionic or zwitterionic phospholipid vesicles. Expressed by the skin glands.

The protein localises to the secreted. It is found in the target cell membrane. Functionally, atypical cationic antimicrobial peptide with potent activity against Gram-negative and Gram-positive bacteria. Acts by inducing permeabilization of bacterial membrane. In vitro, also shows chemoattractant activity, which is mediated through a G protein-coupled receptor (probably FPR2 coupled to the ERK1/2 MAPK kinase pathway). Has slow-kinetic self-association and amyloid-like properties that modulate its activity. The soluble, weakly self-associated forms act on leukocytes to promote chemotaxis but have low antibacterial activity, the oligomers exhibit potent antimicrobial activity, whereas the amyloid-like fibrils have a very weak antibacterial activity. The membrane composition has a great influence on the peptide behavior. The peptide induces membrane leakage and insertion to a lesser extent in model membranes of the anionic lipid phosphatidylglycerol (PG) than in the model membranes of the zwitterionic lipid phosphatidylcholine (PC) vesicles. It forms more fibrils in PC than in PG. Membrane perturbations are more observed in the presence of PG than in the presence of PC. The peptide shows low hemolytic activity. This is Atypical cationic antimicrobial peptide from Phyllomedusa sauvagei (Sauvage's leaf frog).